The chain runs to 355 residues: Peptide chain release factor 1 (355 aa).

Glutamine 231 carries the N5-methylglutamine modification. Basic and acidic residues predominate over residues 280–293 (KERKAKEQSERKDQ). Residues 280–307 (KERKAKEQSERKDQVGTGDRSGRIRTYN) form a disordered region.

Belongs to the prokaryotic/mitochondrial release factor family. Post-translationally, methylated by PrmC. Methylation increases the termination efficiency of RF1.

Its subcellular location is the cytoplasm. Functionally, peptide chain release factor 1 directs the termination of translation in response to the peptide chain termination codons UAG and UAA. This Campylobacter hominis (strain ATCC BAA-381 / DSM 21671 / CCUG 45161 / LMG 19568 / NCTC 13146 / CH001A) protein is Peptide chain release factor 1.